A 314-amino-acid chain; its full sequence is Transcriptional regulatory protein GlnL (314 aa).

Positions 2 to 118 (RFFIADDDRA…EIVTVLQKVK (117 aa)) constitute a Response regulatory domain. Residue Asp-54 is modified to 4-aspartylphosphate.

In terms of processing, phosphorylated by GlnK.

The protein localises to the cytoplasm. Functionally, member of the two-component regulatory system GlnL/GlnK that positively regulates the expression of the glsA-glnT operon in response to glutamine. GlnL binds the promoter region of glsA-glnT in vitro. The sequence is that of Transcriptional regulatory protein GlnL (glnL) from Bacillus subtilis (strain 168).